The primary structure comprises 167 residues: MIVLSRRISEPGTRVVSGTVTLDVDSRIKSRLRVTLDDGREAGLMLERGHLLRGGELLADAEGTQLIRVLAAPEAVSTVRCADPHLLARAAYHLGNRHVPLQIEPGLLRFQHDHVLDDMLRGLGLTVEAEQAPFEPEAGAYQSAPHGHSHSHAHGHDHPFVRLPAHS.

The disordered stretch occupies residues 137–158 (EAGAYQSAPHGHSHSHAHGHDH).

It belongs to the UreE family.

Its subcellular location is the cytoplasm. In terms of biological role, involved in urease metallocenter assembly. Binds nickel. Probably functions as a nickel donor during metallocenter assembly. This chain is Urease accessory protein UreE, found in Pseudomonas putida (strain ATCC 700007 / DSM 6899 / JCM 31910 / BCRC 17059 / LMG 24140 / F1).